A 397-amino-acid polypeptide reads, in one-letter code: Succinate--CoA ligase [ADP-forming] subunit beta (397 aa).

An ATP-grasp domain is found at 9-254; sequence KALLRSYGAP…ETEEDPKELA (246 aa). Residues Lys46, 53 to 55, Glu109, Ser112, and Glu117 contribute to the ATP site; that span reads GRG. Mg(2+) contacts are provided by Asn209 and Asp223. Substrate is bound by residues Asn274 and 331–333; that span reads GIM.

This sequence belongs to the succinate/malate CoA ligase beta subunit family. Heterotetramer of two alpha and two beta subunits. Requires Mg(2+) as cofactor.

It catalyses the reaction succinate + ATP + CoA = succinyl-CoA + ADP + phosphate. The enzyme catalyses GTP + succinate + CoA = succinyl-CoA + GDP + phosphate. It participates in carbohydrate metabolism; tricarboxylic acid cycle; succinate from succinyl-CoA (ligase route): step 1/1. Its function is as follows. Succinyl-CoA synthetase functions in the citric acid cycle (TCA), coupling the hydrolysis of succinyl-CoA to the synthesis of either ATP or GTP and thus represents the only step of substrate-level phosphorylation in the TCA. The beta subunit provides nucleotide specificity of the enzyme and binds the substrate succinate, while the binding sites for coenzyme A and phosphate are found in the alpha subunit. This Cereibacter sphaeroides (strain ATCC 17025 / ATH 2.4.3) (Rhodobacter sphaeroides) protein is Succinate--CoA ligase [ADP-forming] subunit beta.